The chain runs to 570 residues: Urease subunit alpha (570 aa).

A Urease domain is found at Gly-131–Phe-570. His-136, His-138, and Lys-219 together coordinate Ni(2+). Lys-219 carries the N6-carboxylysine modification. Substrate is bound at residue His-221. Positions 248 and 274 each coordinate Ni(2+). The active-site Proton donor is His-322. Asp-362 is a binding site for Ni(2+).

The protein belongs to the metallo-dependent hydrolases superfamily. Urease alpha subunit family. As to quaternary structure, heterotrimer of UreA (gamma), UreB (beta) and UreC (alpha) subunits. Three heterotrimers associate to form the active enzyme. It depends on Ni cation as a cofactor. Carboxylation allows a single lysine to coordinate two nickel ions.

It localises to the cytoplasm. It catalyses the reaction urea + 2 H2O + H(+) = hydrogencarbonate + 2 NH4(+). It functions in the pathway nitrogen metabolism; urea degradation; CO(2) and NH(3) from urea (urease route): step 1/1. The polypeptide is Urease subunit alpha (Sinorhizobium medicae (strain WSM419) (Ensifer medicae)).